Consider the following 152-residue polypeptide: Small ribosomal subunit protein uS15 (152 aa).

Basic residues predominate over residues 1–10; that stretch reads MAKMHTRTKG. Positions 1 to 26 are disordered; that stretch reads MAKMHTRTKGKSGSTKPIRSESPAWS. Residues 11-26 show a composition bias toward polar residues; the sequence is KSGSTKPIRSESPAWS.

This sequence belongs to the universal ribosomal protein uS15 family. As to quaternary structure, part of the 30S ribosomal subunit.

This chain is Small ribosomal subunit protein uS15, found in Methanococcoides burtonii (strain DSM 6242 / NBRC 107633 / OCM 468 / ACE-M).